We begin with the raw amino-acid sequence, 3410 residues long: Genome polyprotein (3410 aa).

Topologically, residues 1 to 103 (MTKKPGRPGR…DFVHLPKKKS (103 aa)) are cytoplasmic. Positions 2-15 (TKKPGRPGRNRAVN) are interaction with host EXOC1. The interval 38–73 (LLDGRGPLRMVLAILAFFRFTALKPTAGLLKRWGMM) is hydrophobic; homodimerization of capsid protein C. Residues 103 to 119 (SGVSIIGRMLVFSFTAA) constitute a propeptide, ER anchor for the capsid protein C, removed in mature form by serine protease NS3. A helical membrane pass occupies residues 104 to 124 (GVSIIGRMLVFSFTAAVRVTL). Residues 125-245 (ENGMSLMKIQ…ATSYLTKAES (121 aa)) lie on the Extracellular side of the membrane. A helical transmembrane segment spans residues 246–266 (WALRNPGYALVAAVLGWSLGT). Residues 267–271 (SNAQK) lie on the Cytoplasmic side of the membrane. A helical transmembrane segment spans residues 272 to 286 (VIFTVMILLIAPAYS). Residues 287-739 (IRCVGVENRD…QIFGGMFRTL (453 aa)) are Extracellular-facing. Intrachain disulfides connect cysteine 289–cysteine 316, cysteine 346–cysteine 402, cysteine 346–cysteine 407, cysteine 360–cysteine 391, cysteine 378–cysteine 402, and cysteine 378–cysteine 407. The fusion peptide stretch occupies residues 384 to 397 (DRGWGNGCGLFGKG). The N-linked (GlcNAc...) asparagine; by host glycan is linked to asparagine 440. Disulfide bonds link cysteine 476–cysteine 574 and cysteine 591–cysteine 622. Residues 740–760 (FGGMSWFTQIMIGALCCWLGI) form a helical membrane-spanning segment. The Cytoplasmic portion of the chain corresponds to 761-766 (NARDRT). A helical transmembrane segment spans residues 767-787 (IAVTFLAVGGVLVFLATSVNA). Topologically, residues 788–1165 (DSGCALDLKR…IALQEVMRKR (378 aa)) are extracellular. Cystine bridges form between cysteine 791–cysteine 802, cysteine 842–cysteine 928, cysteine 964–cysteine 1009, cysteine 1066–cysteine 1115, cysteine 1077–cysteine 1098, cysteine 1077–cysteine 1099, cysteine 1098–cysteine 1102, and cysteine 1099–cysteine 1102. Asparagine 915 is a glycosylation site (N-linked (GlcNAc...) asparagine; by host). A helical transmembrane segment spans residues 1166 to 1186 (ILGRHITWMVIAVFMAMILGG). The Cytoplasmic segment spans residues 1187 to 1214 (LSYRDLGRYLVLVGAAFAERNSGGDLLH). The helical transmembrane segment at 1215 to 1235 (LVLVATFKVKPMALLGFVLGG) threads the bilayer. The Lumenal portion of the chain corresponds to 1236–1242 (RWCRRQS). The helical transmembrane segment at 1243-1263 (LLLSIGAVLVNFALEFQGGYF) threads the bilayer. Residues 1264–1284 (ELVDSLALALLFVKAVVQTDT) lie on the Cytoplasmic side of the membrane. Residues 1285–1305 (TSVSLPLLAALAPAGCYTVLG) traverse the membrane as a helical segment. At 1306-1335 (THRFIMLTLVLVTFLGCKKTASVKKAGTAA) the chain is on the lumenal side. Residues 1336-1356 (VGVVLGMVGMKTIPMLGMLMV) traverse the membrane as a helical segment. Over 1357-1363 (TSRARRS) the chain is Cytoplasmic. The helical transmembrane segment at 1364 to 1384 (WPLHEAMAAVGILCALFGALA) threads the bilayer. At 1385–1387 (ETE) the chain is on the lumenal side. The chain crosses the membrane as a helical span at residues 1388–1408 (VDLAGPLAAAGLIVMAYVISG). Residues 1409–1464 (RSNDLSIKKVEDVKWSDEAEVTGESVSYHVSLDVRGDPTLTEDSGPGLEKVLLKVG) lie on the Cytoplasmic side of the membrane. Positions 1415-1454 (IKKVEDVKWSDEAEVTGESVSYHVSLDVRGDPTLTEDSGP) are interacts with and activates NS3 protease. Positions 1465 to 1485 (LMAISGIYPVAIPFALGAWFF) form an intramembrane region, helical. Topologically, residues 1486–2158 (LEKRCKRAGA…KAALENSPEM (673 aa)) are cytoplasmic. The Peptidase S7 domain maps to 1493–1670 (AGALWDIPSP…ENVGQEDGAE (178 aa)). Catalysis depends on charge relay system; for serine protease NS3 activity residues histidine 1543, aspartate 1567, and serine 1627. Residues 1673–1829 (DNWFRKRELT…PSNSPIIDEE (157 aa)) form the Helicase ATP-binding domain. An important for RNA-binding region spans residues 1677 to 1680 (RKRE). 1686 to 1693 (LHPGAGKT) lines the ATP pocket. The DEAH box signature appears at 1777-1780 (DEAH). In terms of domain architecture, Helicase C-terminal spans 1839–2006 (SGYEWIIEFD…QLYTPEREKT (168 aa)). Lysine 1881 carries the post-translational modification N6-acetyllysine; by host. Residues 2153-2157 (ENSPE) form a regulates the ATPase activity of NS3 helicase region. Residues 2159–2179 (IETFLLCALVCLMTIGLVVVL) traverse the membrane as a helical segment. Topologically, residues 2180-2185 (VRGKGP) are lumenal. Residues 2186–2205 (GKLAFGMVSIGVMTWLLWSA) constitute an intramembrane region (helical). Position 2206 (glycine 2206) is a topological domain, lumenal. Residues 2207-2227 (VDPGKIAAAVILVFLLLVVLI) traverse the membrane as a helical segment. At 2228 to 2242 (PEPEKQRSVQDNQLA) the chain is on the cytoplasmic side. A helical membrane pass occupies residues 2243-2257 (MLMLLIATILGGVAA). Topologically, residues 2258–2293 (NEMGWLEKTKADLSWVVRGRSSTTTPVVELDMKPAT) are lumenal. Positions 2294–2314 (AWTLYALATTLLTPLFQHLIV) form an intramembrane region, helical. Over 2315-2336 (TKYANISLMAIASQAGTLFSMD) the chain is Lumenal. The chain crosses the membrane as a helical span at residues 2337–2357 (SGIPFSSIELSVPLLALGCWT). Position 2358 (glutamine 2358) is a topological domain, cytoplasmic. The chain crosses the membrane as a helical span at residues 2359–2379 (ITPCSLILACVLLSTHYAILL). The Lumenal portion of the chain corresponds to 2380–2420 (PGMQAQAARDAQRRTAAGIMKNAVVDGIVATDIPPLDGAGP). A helical membrane pass occupies residues 2421–2441 (LTEKKLGQLLLFAAAVTGVVI). Topologically, residues 2442–3410 (TRSPRSWSEL…EKRVEFRGVL (969 aa)) are cytoplasmic. The mRNA cap 0-1 NS5-type MT domain maps to 2508 to 2773 (GGGIGETLGE…DVNLSCGTRA (266 aa)). Residue serine 2563 coordinates S-adenosyl-L-methionine. At serine 2563 the chain carries Phosphoserine. The active-site For 2'-O-MTase activity is the lysine 2568. S-adenosyl-L-methionine-binding residues include glycine 2593, tryptophan 2594, threonine 2611, lysine 2612, aspartate 2638, and valine 2639. Aspartate 2653 acts as the For 2'-O-MTase activity in catalysis. Isoleucine 2654 contributes to the S-adenosyl-L-methionine binding site. Active-site for 2'-O-MTase activity residues include lysine 2690 and glutamate 2726. Tyrosine 2728 serves as a coordination point for S-adenosyl-L-methionine. Glutamate 2947, histidine 2951, cysteine 2956, and cysteine 2959 together coordinate Zn(2+). Residues 3036-3187 (GILYADDTAG…AAPDARFGAA (152 aa)) enclose the RdRp catalytic domain. Zn(2+) contacts are provided by histidine 3222, cysteine 3238, and cysteine 3356.

The protein in the N-terminal section; belongs to the class I-like SAM-binding methyltransferase superfamily. mRNA cap 0-1 NS5-type methyltransferase family. In terms of assembly, homodimer. Interacts (via N-terminus) with host EXOC1 (via C-terminus); this interaction results in EXOC1 degradation through the proteasome degradation pathway. Forms heterodimers with envelope protein E in the endoplasmic reticulum and Golgi. As to quaternary structure, homodimer; in the endoplasmic reticulum and Golgi. Interacts with protein prM. Interacts with non-structural protein 1. In terms of assembly, homodimer; Homohexamer when secreted. Interacts with envelope protein E. NS1 interacts with NS4B. Interacts with host complement protein CFH; this interaction leads to the degradation of C3. Interacts (via N-terminus) with serine protease NS3. As to quaternary structure, forms a heterodimer with serine protease NS3. May form homooligomers. In terms of assembly, forms a heterodimer with NS2B. Interacts with non-structural protein 2A (via N-terminus). Interacts with NS4B. Interacts with unphosphorylated RNA-directed RNA polymerase NS5; this interaction stimulates RNA-directed RNA polymerase NS5 guanylyltransferase activity. Interacts with serine protease NS3. As to quaternary structure, homodimer. Interacts with host STAT2; this interaction inhibits the phosphorylation of the latter, and, when all viral proteins are present (polyprotein), targets STAT2 for degradation. In terms of processing, specific enzymatic cleavages in vivo yield mature proteins. Cleavages in the lumen of endoplasmic reticulum are performed by host signal peptidase, whereas cleavages in the cytoplasmic side are performed by serine protease NS3. Signal cleavage at the 2K-4B site requires a prior NS3 protease-mediated cleavage at the 4A-2K site. Cleaved in post-Golgi vesicles by a host furin, releasing the mature small envelope protein M, and peptide pr. This cleavage is incomplete as up to 30% of viral particles still carry uncleaved prM. Post-translationally, N-glycosylated. In terms of processing, N-glycosylated. The excreted form is glycosylated and this is required for efficient secretion of the protein from infected cells. Acetylated by host KAT5. Acetylation modulates NS3 RNA-binding and unwinding activities and plays an important positive role for viral replication. Post-translationally, phosphorylated on serines residues. This phosphorylation may trigger NS5 nuclear localization.

The protein localises to the virion. The protein resides in the host nucleus. It localises to the host cytoplasm. Its subcellular location is the host perinuclear region. It is found in the secreted. The protein localises to the virion membrane. The protein resides in the host endoplasmic reticulum membrane. The catalysed reaction is Selective hydrolysis of -Xaa-Xaa-|-Yaa- bonds in which each of the Xaa can be either Arg or Lys and Yaa can be either Ser or Ala.. The enzyme catalyses RNA(n) + a ribonucleoside 5'-triphosphate = RNA(n+1) + diphosphate. It catalyses the reaction a ribonucleoside 5'-triphosphate + H2O = a ribonucleoside 5'-diphosphate + phosphate + H(+). It carries out the reaction ATP + H2O = ADP + phosphate + H(+). The catalysed reaction is a 5'-end (5'-triphosphoguanosine)-ribonucleoside in mRNA + S-adenosyl-L-methionine = a 5'-end (N(7)-methyl 5'-triphosphoguanosine)-ribonucleoside in mRNA + S-adenosyl-L-homocysteine. The enzyme catalyses a 5'-end (N(7)-methyl 5'-triphosphoguanosine)-ribonucleoside in mRNA + S-adenosyl-L-methionine = a 5'-end (N(7)-methyl 5'-triphosphoguanosine)-(2'-O-methyl-ribonucleoside) in mRNA + S-adenosyl-L-homocysteine + H(+). In terms of biological role, plays a role in virus budding by binding to the cell membrane and gathering the viral RNA into a nucleocapsid that forms the core of a mature virus particle. During virus entry, may induce genome penetration into the host cytoplasm after hemifusion induced by the surface proteins. Can migrate to the cell nucleus where it modulates host functions. Overcomes the anti-viral effects of host EXOC1 by sequestering and degrading the latter through the proteasome degradation pathway. Functionally, inhibits RNA silencing by interfering with host Dicer. Its function is as follows. Prevents premature fusion activity of envelope proteins in trans-Golgi by binding to envelope protein E at pH6.0. After virion release in extracellular space, gets dissociated from E dimers. Acts as a chaperone for envelope protein E during intracellular virion assembly by masking and inactivating envelope protein E fusion peptide. prM is the only viral peptide matured by host furin in the trans-Golgi network probably to avoid catastrophic activation of the viral fusion activity in acidic Golgi compartment prior to virion release. prM-E cleavage is inefficient, and many virions are only partially matured. These uncleaved prM would play a role in immune evasion. In terms of biological role, may play a role in virus budding. Exerts cytotoxic effects by activating a mitochondrial apoptotic pathway through M ectodomain. May display a viroporin activity. Functionally, binds to host cell surface receptor and mediates fusion between viral and cellular membranes. Envelope protein is synthesized in the endoplasmic reticulum in the form of heterodimer with protein prM. They play a role in virion budding in the ER, and the newly formed immature particle is covered with 60 spikes composed of heterodimer between precursor prM and envelope protein E. The virion is transported to the Golgi apparatus where the low pH causes dissociation of PrM-E heterodimers and formation of E homodimers. prM-E cleavage is inefficient, and many virions are only partially matured. These uncleaved prM would play a role in immune evasion. Its function is as follows. Involved in immune evasion, pathogenesis and viral replication. Once cleaved off the polyprotein, is targeted to three destinations: the viral replication cycle, the plasma membrane and the extracellular compartment. Essential for viral replication. Required for formation of the replication complex and recruitment of other non-structural proteins to the ER-derived membrane structures. Excreted as a hexameric lipoparticle that plays a role against host immune response. Antagonizing the complement function. Binds to the host macrophages and dendritic cells. Inhibits signal transduction originating from Toll-like receptor 3 (TLR3). Component of the viral RNA replication complex that functions in virion assembly and antagonizes the host alpha/beta interferon antiviral response. In terms of biological role, required cofactor for the serine protease function of NS3. May have membrane-destabilizing activity and form viroporins. Functionally, displays three enzymatic activities: serine protease, NTPase and RNA helicase. NS3 serine protease, in association with NS2B, performs its autocleavage and cleaves the polyprotein at dibasic sites in the cytoplasm: C-prM, NS2A-NS2B, NS2B-NS3, NS3-NS4A, NS4A-2K and NS4B-NS5. NS3 RNA helicase binds RNA and unwinds dsRNA in the 3' to 5' direction. Its function is as follows. Regulates the ATPase activity of the NS3 helicase activity. NS4A allows NS3 helicase to conserve energy during unwinding. Functions as a signal peptide for NS4B and is required for the interferon antagonism activity of the latter. In terms of biological role, induces the formation of ER-derived membrane vesicles where the viral replication takes place. Inhibits interferon (IFN)-induced host STAT1 phosphorylation and nuclear translocation, thereby preventing the establishment of cellular antiviral state by blocking the IFN-alpha/beta pathway. Inhibits STAT2 translocation in the nucleus after IFN-alpha treatment. Functionally, replicates the viral (+) and (-) RNA genome, and performs the capping of genomes in the cytoplasm. NS5 methylates viral RNA cap at guanine N-7 and ribose 2'-O positions. Besides its role in RNA genome replication, also prevents the establishment of cellular antiviral state by blocking the interferon-alpha/beta (IFN-alpha/beta) signaling pathway. Inhibits host TYK2 and STAT2 phosphorylation, thereby preventing activation of JAK-STAT signaling pathway. The sequence is that of Genome polyprotein from Kokobera virus (KOKV).